Consider the following 330-residue polypeptide: DNA primase small subunit PriS (330 aa).

Residues Asp101 and Asp103 contribute to the active site. Zn(2+)-binding residues include Cys116, Cys119, Cys128, and Asp131. Asp235 is an active-site residue.

This sequence belongs to the eukaryotic-type primase small subunit family. As to quaternary structure, heterodimer of a small subunit (PriS) and a large subunit (PriL). Mg(2+) serves as cofactor. Requires Mn(2+) as cofactor.

In terms of biological role, catalytic subunit of DNA primase, an RNA polymerase that catalyzes the synthesis of short RNA molecules used as primers for DNA polymerase during DNA replication. The small subunit contains the primase catalytic core and has DNA synthesis activity on its own. Binding to the large subunit stabilizes and modulates the activity, increasing the rate of DNA synthesis while decreasing the length of the DNA fragments, and conferring RNA synthesis capability. The DNA polymerase activity may enable DNA primase to also catalyze primer extension after primer synthesis. May also play a role in DNA repair. Possesses a template-independent 3'-terminal nucleotidyl transferase activity. The sequence is that of DNA primase small subunit PriS from Saccharolobus solfataricus (strain ATCC 35092 / DSM 1617 / JCM 11322 / P2) (Sulfolobus solfataricus).